The following is a 460-amino-acid chain: Bifunctional protein GlmU (460 aa).

The interval 1-232 (MALNVVILAA…AIEVEGANNR (232 aa)) is pyrophosphorylase. Residues 8 to 11 (LAAG), lysine 22, glutamine 73, 78 to 79 (GT), 100 to 102 (YGD), glycine 137, glutamate 157, asparagine 172, and asparagine 230 each bind UDP-N-acetyl-alpha-D-glucosamine. Position 102 (aspartate 102) interacts with Mg(2+). Asparagine 230 is a binding site for Mg(2+). Positions 233–253 (VQLAQLERAYQAREAEKLMLA) are linker. An N-acetyltransferase region spans residues 254–460 (GANLRDPSRI…GWQRPVKIKK (207 aa)). Residues arginine 336 and lysine 354 each contribute to the UDP-N-acetyl-alpha-D-glucosamine site. Histidine 366 acts as the Proton acceptor in catalysis. Tyrosine 369 and asparagine 380 together coordinate UDP-N-acetyl-alpha-D-glucosamine. Residues alanine 383, 389-390 (NY), serine 408, alanine 426, and arginine 443 contribute to the acetyl-CoA site.

In the N-terminal section; belongs to the N-acetylglucosamine-1-phosphate uridyltransferase family. It in the C-terminal section; belongs to the transferase hexapeptide repeat family. In terms of assembly, homotrimer. Mg(2+) is required as a cofactor.

The protein localises to the cytoplasm. The catalysed reaction is alpha-D-glucosamine 1-phosphate + acetyl-CoA = N-acetyl-alpha-D-glucosamine 1-phosphate + CoA + H(+). It carries out the reaction N-acetyl-alpha-D-glucosamine 1-phosphate + UTP + H(+) = UDP-N-acetyl-alpha-D-glucosamine + diphosphate. It participates in nucleotide-sugar biosynthesis; UDP-N-acetyl-alpha-D-glucosamine biosynthesis; N-acetyl-alpha-D-glucosamine 1-phosphate from alpha-D-glucosamine 6-phosphate (route II): step 2/2. It functions in the pathway nucleotide-sugar biosynthesis; UDP-N-acetyl-alpha-D-glucosamine biosynthesis; UDP-N-acetyl-alpha-D-glucosamine from N-acetyl-alpha-D-glucosamine 1-phosphate: step 1/1. The protein operates within bacterial outer membrane biogenesis; LPS lipid A biosynthesis. In terms of biological role, catalyzes the last two sequential reactions in the de novo biosynthetic pathway for UDP-N-acetylglucosamine (UDP-GlcNAc). The C-terminal domain catalyzes the transfer of acetyl group from acetyl coenzyme A to glucosamine-1-phosphate (GlcN-1-P) to produce N-acetylglucosamine-1-phosphate (GlcNAc-1-P), which is converted into UDP-GlcNAc by the transfer of uridine 5-monophosphate (from uridine 5-triphosphate), a reaction catalyzed by the N-terminal domain. The protein is Bifunctional protein GlmU of Shewanella baltica (strain OS195).